A 195-amino-acid polypeptide reads, in one-letter code: MELSESVQRGIQTLADPGSFDSNAFALLLRAAFQSLLDARADEAALDHPYLKQIDPVVLKHCHAAAATCILEAGKHQVDKSTLSTYLEDCKFDRERIELFCTEYQNNKNSLETLLGSIGRSLPHITDVSWRLEYQIKTNQLHKMYRPGYLVTLNVENNDSQSYPEINFSCNMEQLQDLVGKLKDASKSLERATQL.

Residues 124-193 (HITDVSWRLE…DASKSLERAT (70 aa)) enclose the COMM domain.

It belongs to the COMM domain-containing protein 3 family. In terms of assembly, component of the commander complex consisting of the CCC subcomplex and the retriever subcomplex. Component of the CCC (COMMD/CCDC22/CCDC93) subcomplex consisting of COMMD1, COMMD2, COMMD3, COMMD4, COMMD5, COMMD6, COMMD7, COMMD8, COMMD9, COMMD10, CCDC22 and CCDC93; within the complex forms a heterodimer with COMMD2. Interacts with NFKB1/p105. Interacts with CCDC22, CCDC93, SCNN1B, CUL3, CUL4A, CUL4B, CUL5.

The protein resides in the cytoplasm. It localises to the nucleus. Scaffold protein in the commander complex that is essential for endosomal recycling of transmembrane cargos; the commander complex is composed of the CCC subcomplex and the retriever subcomplex. May modulate activity of cullin-RING E3 ubiquitin ligase (CRL) complexes. May down-regulate activation of NF-kappa-B. Modulates Na(+) transport in epithelial cells by regulation of apical cell surface expression of amiloride-sensitive sodium channel (ENaC) subunits. The polypeptide is COMM domain-containing protein 3 (Commd3) (Mus musculus (Mouse)).